The following is a 634-amino-acid chain: Coilin (634 aa).

Disordered stretches follow at residues 87–135, 149–276, and 342–361; these read VSPA…IAEN, PGPS…KLSQ, and GAKSDDTAKQFPSNGKDSTL. A compositionally biased stretch (polar residues) spans 152–181; that stretch reads SVQSKLLTNKGTPKAPETQTEVSNMSANIE. 2 stretches are compositionally biased toward basic and acidic residues: residues 223–234 and 251–272; these read TLKEGKMSESKN and KENETREEQQDKTHLESNKIPD.

The protein belongs to the coilin family. In terms of tissue distribution, in egg chambers expressed in the follicle cells, nurse cells and oocyte. Expressed in the larval brain, salivary glands, fat bodies and in the somatic hub cells at the tip of the testis. Expressed in the spermatogonia and spermatocytes, and in the adult ejaculatory duct (at protein level). Expressed in the adult Malpighian tubules.

The protein localises to the nucleus. It localises to the nucleoplasm. It is found in the cajal body. The protein resides in the chromosome. Its subcellular location is the centromere. The protein localises to the cytoplasm. It localises to the cytoskeleton. It is found in the spindle. In terms of biological role, component of nuclear coiled bodies, also known as Cajal bodies or CBs, which are involved in the modification and assembly of nucleoplasmic snRNPs. Required for Cajal body formation. This Drosophila melanogaster (Fruit fly) protein is Coilin.